We begin with the raw amino-acid sequence, 318 residues long: Protein W (318 aa).

Disordered stretches follow at residues 1-23 (MDQD…GGRE) and 38-318 (SEPT…KKGA). Over residues 7–20 (ILKEDSEVEREAPG) the composition is skewed to basic and acidic residues. Polar residues predominate over residues 50–59 (LHNTINTPQG). The residue at position 68 (Ser-68) is a Phosphoserine; by host. Residues 83–101 (RSGEESRVSGRTSKPEAEA) show a composition bias toward basic and acidic residues. Ser-125 is subject to Phosphoserine; by host. The segment covering 150 to 168 (GIEDENREMAAHPDKRGED) has biased composition (basic and acidic residues). A compositionally biased stretch (polar residues) spans 191–206 (ASNNGRSMEPGSSHSA). Phosphoserine; by host occurs at positions 192, 249, 257, and 260.

This Sendai virus (strain Harris) (SeV) protein is Protein W (P/V/C).